A 158-amino-acid chain; its full sequence is 6,7-dimethyl-8-ribityllumazine synthase (158 aa).

Residues F24, 58–60 (AFE), and 82–84 (AVI) each bind 5-amino-6-(D-ribitylamino)uracil. 87–88 (GT) lines the (2S)-2-hydroxy-3-oxobutyl phosphate pocket. Catalysis depends on H90, which acts as the Proton donor. F115 provides a ligand contact to 5-amino-6-(D-ribitylamino)uracil. R129 provides a ligand contact to (2S)-2-hydroxy-3-oxobutyl phosphate.

This sequence belongs to the DMRL synthase family. In terms of assembly, forms an icosahedral capsid composed of 60 subunits, arranged as a dodecamer of pentamers.

The catalysed reaction is (2S)-2-hydroxy-3-oxobutyl phosphate + 5-amino-6-(D-ribitylamino)uracil = 6,7-dimethyl-8-(1-D-ribityl)lumazine + phosphate + 2 H2O + H(+). It participates in cofactor biosynthesis; riboflavin biosynthesis; riboflavin from 2-hydroxy-3-oxobutyl phosphate and 5-amino-6-(D-ribitylamino)uracil: step 1/2. Catalyzes the formation of 6,7-dimethyl-8-ribityllumazine by condensation of 5-amino-6-(D-ribitylamino)uracil with 3,4-dihydroxy-2-butanone 4-phosphate. This is the penultimate step in the biosynthesis of riboflavin. This is 6,7-dimethyl-8-ribityllumazine synthase from Azotobacter vinelandii (strain DJ / ATCC BAA-1303).